The chain runs to 244 residues: 6-carboxyhexanoate--CoA ligase (244 aa).

Belongs to the BioW family. In terms of assembly, homodimer. It depends on Mg(2+) as a cofactor.

The catalysed reaction is heptanedioate + ATP + CoA = 6-carboxyhexanoyl-CoA + AMP + diphosphate. It participates in metabolic intermediate metabolism; pimeloyl-CoA biosynthesis; pimeloyl-CoA from pimelate: step 1/1. Its function is as follows. Catalyzes the transformation of pimelate into pimeloyl-CoA with concomitant hydrolysis of ATP to AMP. The sequence is that of 6-carboxyhexanoate--CoA ligase from Methanococcus maripaludis (strain DSM 14266 / JCM 13030 / NBRC 101832 / S2 / LL).